The sequence spans 208 residues: Putative ankyrin repeat protein Ta0196 (208 aa).

ANK repeat units follow at residues 49 to 78, 82 to 111, 115 to 144, and 148 to 177; these read YQRNALMISAMYGRTDLIEFFAARYDHIDD, EGNTALMWAVRNNRMESAKSLIALKCSIDI, AGNTPICWAVIFGYTDMVKLLISSGANINI, and EGDTPAILASKYGRSECLKMLIEAGCDLNA.

The chain is Putative ankyrin repeat protein Ta0196 from Thermoplasma acidophilum (strain ATCC 25905 / DSM 1728 / JCM 9062 / NBRC 15155 / AMRC-C165).